The primary structure comprises 513 residues: MQLNSTEISDLIKQRIESFEVVSEARNEGTIVSVSDGIIRIHGLADVMQGEMIELPGGRYALALNLERDSVGAVVMGPYADLKEGMKVTGTGRILEVPVGPELLGRVVNTLGEPIDGKGPIEAKMTSPVEVIAPGVIDRKSVDQPVQTGYKSVDSMIPIGRGQRELIIGDRQIGKTALAIDAIINQKDSGIFSIYVAIGQKASTIANVVRKLEEHGALQNTIVVVASASESAALQYLAPYAGCAMGEYFRDRGEDALIVYDDLSKQAVAYRQISLLLKRPPGREAFPGDVFYLHSRLLERAARVNEEYVERFTNGEVKGKTGSLTALPIIETQAGDVSAFVPTNVISITDGQIFLQTELFNAGVRPAVDPGISVSRVGGSAQTKIIKKLSGGIRTALAAYRELAAFAQFSSDLDEATKKQLDHGQKVTELMKQKQYAPMSVFDQALTIFAAERGYLDDVELNKVLDFEAALLSYARGQYAELAAEIDKSGAYNDEIEAQLKKLTDDFKATQTW.

An ATP-binding site is contributed by 169 to 176 (GDRQIGKT).

The protein belongs to the ATPase alpha/beta chains family. In terms of assembly, F-type ATPases have 2 components, CF(1) - the catalytic core - and CF(0) - the membrane proton channel. CF(1) has five subunits: alpha(3), beta(3), gamma(1), delta(1), epsilon(1). CF(0) has three main subunits: a(1), b(2) and c(9-12). The alpha and beta chains form an alternating ring which encloses part of the gamma chain. CF(1) is attached to CF(0) by a central stalk formed by the gamma and epsilon chains, while a peripheral stalk is formed by the delta and b chains.

The protein localises to the cell inner membrane. The catalysed reaction is ATP + H2O + 4 H(+)(in) = ADP + phosphate + 5 H(+)(out). Produces ATP from ADP in the presence of a proton gradient across the membrane. The alpha chain is a regulatory subunit. The polypeptide is ATP synthase subunit alpha (Vibrio alginolyticus).